The following is a 927-amino-acid chain: Lysine-specific demethylase JMJ28 (927 aa).

The 46-residue stretch at 7 to 52 (VPDEFRCNRSDGKQWRCKRRALEGKKMCESHHSQQSLKRSKQKVAE) folds into the WRC domain. The Nuclear localization signal 1 signature appears at 30 to 37 (GKKMCESH). Positions 30-92 (GKKMCESHHS…RLGKSKRKRV (63 aa)) are disordered. The segment covering 80–91 (RSKRLGKSKRKR) has biased composition (basic residues). Residues 127–134 (EKRKRLPN) carry the Nuclear localization signal 2 motif. 8 residues coordinate Zn(2+): C227, C230, C241, C244, C250, C253, C269, and C272. The segment at 227–273 (CHWCGTRGFGDLISCLSCEREFFCIDCIEKRNKGSKEEVEKKCPVCR) adopts an RING-type; degenerate zinc-finger fold. The span at 330–339 (ENDAEKKEGN) shows a compositional bias: basic and acidic residues. Disordered regions lie at residues 330–359 (ENDA…QPCS) and 701–736 (RSKN…SQHC). One can recognise a JmjC domain in the interval 601 to 881 (FPNHYAEILN…ESIKRVKELN (281 aa)).

It belongs to the JARID1 histone demethylase family. In terms of assembly, interacts with the FBH transcription factors FBH1, FBH2, FBH3 and FBH4. Fe(2+) is required as a cofactor. In terms of tissue distribution, expressed in inflorescences, flowers, roots, siliques, leaves and stems, especially in the vasculature (mainly phloem), with highest levels in floral organs. Present at high levels in flowers, shoot apex and young seeds, but observed at low levels in dry seeds, root apex and anthers.

Its subcellular location is the nucleus. In terms of biological role, may function as histone H3 lysine demethylase and be involved in regulation of gene expression. Regulates flowering time by promoting CONSTANS (CO) and CONSTANS-LIKE genes (e.g. COL2 and COL5) expression via interaction with FBH transcription factors (FBH1, FBH2, FBH3 and FBH4) at their loci to remove H3K9me2 repressive histone marks. Also modulates the expression of several developmental genes such as MYB30, TFS1, AGL6 and RVE2. This chain is Lysine-specific demethylase JMJ28, found in Arabidopsis thaliana (Mouse-ear cress).